The following is a 419-amino-acid chain: Delta(8)-fatty-acid desaturase (419 aa).

The Cytochrome b5 heme-binding domain maps to 1–64; it reads MKSKRQALSP…LKRMPKINPS (64 aa). Heme contacts are provided by His24 and His47. Residues 110 to 130 form a helical membrane-spanning segment; sequence LGVLGYFLMVQYQMYFIGAVL. The short motif at 143–147 is the Histidine box-1 element; it reads HDICH. A helical membrane pass occupies residues 156 to 176; that stretch reads WNNLVGLVFGNGLQGFSVTCW. The short motif at 180–184 is the Histidine box-2 element; sequence HNAHH. Transmembrane regions (helical) follow at residues 226-246, 266-286, and 290-310; these read YFLVICILLRFIWCFQCVLTV, IGLALHWTLKALFHLFFMPSI, and LLVFFVSELVGGFGIAIVVFM. A Histidine box-3 motif is present at residues 355–359; that stretch reads QIEHH.

It belongs to the fatty acid desaturase type 1 family. Requires Fe cation as cofactor.

It localises to the membrane. It catalyses the reaction an (11Z,14Z)-icosadienoyl-containing glycerolipid + 2 Fe(II)-[cytochrome b5] + O2 + 2 H(+) = an (8Z,11Z,14Z)-icosatrienoyl-containing glycerolipid + 2 Fe(III)-[cytochrome b5] + 2 H2O. It carries out the reaction an (11Z,14Z,17Z)-icosatrienoyl-containing glycerolipid + 2 Fe(II)-[cytochrome b5] + O2 + 2 H(+) = an (8Z,11Z,14Z,17Z)-eicosatetraenoyl-containing glycerolipid + 2 Fe(III)-[cytochrome b5] + 2 H2O. The catalysed reaction is an (11Z)-eicosenoyl-containing glycerolipid + 2 Fe(II)-[cytochrome b5] + O2 + 2 H(+) = a (8Z,11Z)-eicosadienoyl-containing glycerolipid + 2 Fe(III)-[cytochrome b5] + 2 H2O. It participates in lipid metabolism; fatty acid metabolism. Delta(8)-fatty-acid desaturase which introduces a double bond at the 8-position in 20-carbon chain length fatty acids (C20) that have an existing delta-11 unsaturation (double bond). Whether it acts on CoA-linked substrates (as in animals) or phospholipid-linked substrates (as in plants and fungi) is still not clear. The sequence is that of Delta(8)-fatty-acid desaturase (efd1) from Euglena gracilis.